A 945-amino-acid polypeptide reads, in one-letter code: Bifunctional glutamine synthetase adenylyltransferase/adenylyl-removing enzyme (945 aa).

The segment at 1 to 440 (MMPLSPQLQQ…VFNELIGDDE (440 aa)) is adenylyl removase. The interval 449–945 (AEYWRELWQD…SASWQKWLMA (497 aa)) is adenylyl transferase.

The protein belongs to the GlnE family. The cofactor is Mg(2+).

The enzyme catalyses [glutamine synthetase]-O(4)-(5'-adenylyl)-L-tyrosine + phosphate = [glutamine synthetase]-L-tyrosine + ADP. The catalysed reaction is [glutamine synthetase]-L-tyrosine + ATP = [glutamine synthetase]-O(4)-(5'-adenylyl)-L-tyrosine + diphosphate. Functionally, involved in the regulation of glutamine synthetase GlnA, a key enzyme in the process to assimilate ammonia. When cellular nitrogen levels are high, the C-terminal adenylyl transferase (AT) inactivates GlnA by covalent transfer of an adenylyl group from ATP to specific tyrosine residue of GlnA, thus reducing its activity. Conversely, when nitrogen levels are low, the N-terminal adenylyl removase (AR) activates GlnA by removing the adenylyl group by phosphorolysis, increasing its activity. The regulatory region of GlnE binds the signal transduction protein PII (GlnB) which indicates the nitrogen status of the cell. The polypeptide is Bifunctional glutamine synthetase adenylyltransferase/adenylyl-removing enzyme (Klebsiella pneumoniae subsp. pneumoniae (strain ATCC 700721 / MGH 78578)).